The sequence spans 320 residues: MTLTVSPTAARTPAEEKARFEGNKLAKRLARETTRAIADYNMIEAGDKVMVCLSGGKDSYALLDILLSLQKRAPFAFEIIAVNLDQKQPGFPPEILPGYLRALGVPFHIETQDTYSIVTRVIPEGKTMCSLCSRLRRGILYRVASELGATKIALGHHRDDILGTFFLNLFYGGKAKGMPPKLVSDDGRHTVIRPLAYVPESDLIAYAQFKQFPIIPCNLCGSQENLKRKEVGRMIQEWDRKHPGRSWNVFNALSRVVPSHLMDRDLFDFVGLKPTGVADAGGDTAFDQIDPEPDTAGPGCASDAPAGQADGMAEQRVVFR.

Residues 54–59 carry the PP-loop motif motif; it reads SGGKDS. [4Fe-4S] cluster contacts are provided by cysteine 129, cysteine 132, and cysteine 220.

This sequence belongs to the TtcA family. In terms of assembly, homodimer. The cofactor is Mg(2+). [4Fe-4S] cluster is required as a cofactor.

The protein localises to the cytoplasm. It carries out the reaction cytidine(32) in tRNA + S-sulfanyl-L-cysteinyl-[cysteine desulfurase] + AH2 + ATP = 2-thiocytidine(32) in tRNA + L-cysteinyl-[cysteine desulfurase] + A + AMP + diphosphate + H(+). The protein operates within tRNA modification. In terms of biological role, catalyzes the ATP-dependent 2-thiolation of cytidine in position 32 of tRNA, to form 2-thiocytidine (s(2)C32). The sulfur atoms are provided by the cysteine/cysteine desulfurase (IscS) system. This is tRNA-cytidine(32) 2-sulfurtransferase from Bordetella parapertussis (strain 12822 / ATCC BAA-587 / NCTC 13253).